Here is a 441-residue protein sequence, read N- to C-terminus: UBX domain-containing protein 6 (441 aa).

Positions 1–10 (MKKFFQEIKA) are mediates interaction with LMAN1. Disordered stretches follow at residues 12–57 (IKFK…MAAA), 62–81 (RLEQ…SIRN), and 86–113 (ELRA…EEGS). Residues 27 to 36 (VGEKAPKEKP) are compositionally biased toward basic and acidic residues. Residues 51-63 (EAQMAAAAALARL) are VCP/p97-interacting motif (VIM). Residues 175–244 (VDTIAKYLDN…GPEEFYVLSE (70 aa)) enclose the PUB domain. One can recognise a UBX domain in the interval 332–408 (RKYTYTLLRV…GLVPSALLTF (77 aa)).

Interacts with VCP through the PUB domain (via C-terminus) and VIM motif (via N-terminus); the interaction is direct. Forms a ternary complex with CAV1 and VCP. Interacts with SYVN1. Interacts with HERPUD1. Interacts with VCPKMT. May interact with DERL1. Interacts with PLAA, VCP and YOD1; may form a complex involved in macroautophagy. Interacts with LMAN1.

The protein resides in the cytoplasm. Its subcellular location is the cytosol. It is found in the membrane. The protein localises to the nucleus. It localises to the cytoskeleton. The protein resides in the microtubule organizing center. Its subcellular location is the centrosome. It is found in the early endosome membrane. The protein localises to the late endosome membrane. It localises to the lysosome membrane. In terms of biological role, may negatively regulate the ATPase activity of VCP, an ATP-driven segregase that associates with different cofactors to control a wide variety of cellular processes. As a cofactor of VCP, it may play a role in the transport of CAV1 to lysosomes for degradation. It may also play a role in endoplasmic reticulum-associated degradation (ERAD) of misfolded proteins. Together with VCP and other cofactors, it may play a role in macroautophagy, regulating for instance the clearance of damaged lysosomes. The chain is UBX domain-containing protein 6 from Bos taurus (Bovine).